A 319-amino-acid chain; its full sequence is Aminoimidazole riboside kinase (319 aa).

Positions 16, 31, and 101 each coordinate 5-amino-1-(beta-D-ribosyl)imidazole. 158–160 is an ATP binding site; sequence DVN. A 5-amino-1-(beta-D-ribosyl)imidazole-binding site is contributed by arginine 162. Alanine 180, alanine 181, and alanine 183 together coordinate K(+). Residues lysine 187 and glutamate 192 each coordinate ATP. Residue glycine 213 coordinates K(+). 220–225 contributes to the ATP binding site; sequence SLGADG. K(+) contacts are provided by aspartate 246 and threonine 248. A 5-amino-1-(beta-D-ribosyl)imidazole-binding site is contributed by aspartate 252. The Proton acceptor role is filled by aspartate 252. Asparagine 281 provides a ligand contact to ATP. Residues alanine 287, alanine 290, and glycine 292 each contribute to the K(+) site.

Belongs to the carbohydrate kinase PfkB family. Homodimer.

It catalyses the reaction 5-amino-1-(beta-D-ribosyl)imidazole + ATP = 5-amino-1-(5-phospho-beta-D-ribosyl)imidazole + ADP + H(+). Its activity is regulated as follows. Potassium may regulate kinase activity. Functionally, phosphorylates 5-amino-1-(beta-D-ribosyl)imidazole (AIRs) to form 5-amino-1-(5-phospho-beta-D-ribosyl)imidazole (AIR), an important intermediate in the purine and thiamine biosynthetic pathways. It allows the use of exogenous aminoimidazole riboside (AIRs) to satisfy the cellular requirement for purines and thiamine. This is Aminoimidazole riboside kinase from Salmonella typhimurium (strain LT2 / SGSC1412 / ATCC 700720).